The chain runs to 265 residues: tRNA pseudouridine synthase A (265 aa).

Residue aspartate 58 is the Nucleophile of the active site. Tyrosine 116 provides a ligand contact to substrate.

Belongs to the tRNA pseudouridine synthase TruA family. Homodimer.

The catalysed reaction is uridine(38/39/40) in tRNA = pseudouridine(38/39/40) in tRNA. In terms of biological role, formation of pseudouridine at positions 38, 39 and 40 in the anticodon stem and loop of transfer RNAs. This is tRNA pseudouridine synthase A from Neisseria meningitidis serogroup C / serotype 2a (strain ATCC 700532 / DSM 15464 / FAM18).